We begin with the raw amino-acid sequence, 1796 residues long: U3 small nucleolar RNA-associated protein 10 (1796 aa).

12 HEAT repeats span residues 586-623, 656-692, 861-898, 983-1021, 1052-1089, 1161-1198, 1258-1295, 1302-1340, 1344-1383, 1492-1529, 1711-1748, and 1752-1789; these read LDLQ…SNAE, LLQE…SATG, DLTT…SDHS, DTSV…TAPD, QTIK…AYEH, QPKP…VLSS, LSIG…QESN, TVLL…KYGK, EAVA…VLQD, SAVE…SALD, DHRK…TLGE, and EMLS…ILGE. The interval 881 to 901 is disordered; that stretch reads TTDSPATKRRRTSSSDHSRGV.

The protein belongs to the HEATR1/UTP10 family. In terms of assembly, component of the ribosomal small subunit (SSU) processome.

The protein resides in the nucleus. It is found in the nucleolus. Its function is as follows. Involved in nucleolar processing of pre-18S ribosomal RNA. Involved in ribosome biosynthesis. This chain is U3 small nucleolar RNA-associated protein 10, found in Pyricularia oryzae (strain 70-15 / ATCC MYA-4617 / FGSC 8958) (Rice blast fungus).